A 1069-amino-acid chain; its full sequence is Protocadherin-8 (1069 aa).

The signal sequence occupies residues 1–29 (MSPVKRWGSPCLFPLQLFSLCWVLSVAQS). Cadherin domains are found at residues 30 to 135 (KTVR…APRF), 136 to 245 (PRAQ…SPAF), 247 to 354 (QGAV…APDI), 393 to 497 (QETG…APLF), 498 to 609 (TKPV…SPVL), and 615 to 721 (ANGS…VPAS). Residues 30–747 (KTVRYSTFEE…SGPSLQWDTP (718 aa)) are Extracellular-facing. N616 carries an N-linked (GlcNAc...) asparagine glycan. The tract at residues 719 to 738 (PASAGSPEHFRPPGSRLAPS) is disordered. Residues 748–768 (LIVIIVLAGSCTLLLAAIIAI) form a helical membrane-spanning segment. At 769 to 1069 (ATTCNRRKKE…SPKKGTNENV (301 aa)) the chain is on the cytoplasmic side. Disordered stretches follow at residues 777–859 (KEVR…TGES), 905–927 (REAE…DSDS), and 1031–1069 (LSPP…NENV). Composition is skewed to basic and acidic residues over residues 780–790 (RKGGALREERP) and 905–920 (REAE…KGDS). S1052 is subject to Phosphoserine.

In terms of assembly, the N-terminal extracellular domain forms homophilic interactions; these interactions activate p38 MAPK via TAOK2 and trigger endocytosis. Interacts with CDH2; this interaction may lead to CDH2 cointernalization. Interacts with CDH11. Interacts with TAOK2. Enriched in brain relative to peripheral tissues, with low expression in the testis. Expressed in hippocampal neurons (at protein level).

It localises to the cell membrane. The protein resides in the cell projection. It is found in the dendrite. The protein localises to the presynaptic cell membrane. Its subcellular location is the postsynaptic cell membrane. Calcium-dependent cell-adhesion protein. May play a role in activity-induced synaptic reorganization underlying long term memory. Could be involved in CDH2 internalization through TAOK2/p38 MAPK pathway. In hippocampal neurons, may play a role in the down-regulation of dendritic spines, maybe through its action on CDH2 endocytosis. The polypeptide is Protocadherin-8 (Pcdh8) (Rattus norvegicus (Rat)).